The sequence spans 1345 residues: MENWRTAEIFPKLDVSPNVFDDIRTQTAEQLFENLRLYYGDDSDRYNISFEALLGIYCNRTEWIDFFHTSIAVAANVIRFNDLDKMSLGKILFYIQLPRVATGNDVTAPKETTVLVTKYSEKHPINISFELSAACLAHLENTFKNTILDQMLNINAIHTVLRSLKNSADSLQRGLIYAFIKTILKKAPPQFILKTMLENKVNSKQILSKVQRSNMFQNFKNKLINSLFFLNRTSNVSFIYRYLCEMVDSTTESILNNTNSYVLKDGTPINGVLLGTPNTIQILSNALSQHISQMTMSVPVSYGTFVMGKENAVTAIAYQAIMADFSNYTKNVATETQDQNKKSEIFENQTQHADLKTNIIQLSDKTVVLDHLKKVYKNTNIEDPLEQKLELTFFFPMGLYISKDSGFSTMDSRLKLNDTMENNLPTSIYFYNKDKLLQRIDYSDLLPSLCHPIIFDCSVSERIFKNAAKPTGESFNQLCQVEFVREPPSTFLSNLYNLYEMKKEIPKTTNMLKNELTTEDFYKSENFTLKTELHPFFDFTYIQKNRSTDVLCSPRILLGNIPLPLAPSSFHEARTNQMIEQAKTNNLNYDYTLKLVVESLTNTAYPELAYIIELLIHGNKTAFQILKDVVSQCITYWYNIKHILLFCNNFEMIWLITTYLGDESIPGIAYTHYKNIISILKLVKRTISISNFNEQLCGEPLVGFVNALFDNRLFPPFLNSLPKNEANAIITAGNTPLTQNTVKLRNYEVSDLNRMNLLDSTEIFTDVDRPSFETIVLSKIFYFCFLPALTNNKMCGAGFDVKSFILDFFYTEPFILPDDNFCELPITNNVLIELITEAVGPSHALTDLSCIGKQLFKSILYLTENTKILEIESSLDPSQRHGSSSNFKSLQHVLYNGLCLVSPINVLKRYFKPIPFNRFFSDPIICGLMNIEVQTYLNIFPHYQRNDGGFPLPQALSHEFHNWQRTPFFVYASCCSNSLLSIMTLATMHCKLSPIAIILQSRQKIHPGFAATLVRTDCFDINCLLYSSKSATSIMIDDPTVSTEVKDISTTYNLTQHISFLDMGLGFSSSTAIANLKRVKTDMGSKVQDLFSVFPMHAYTNPTVNSWVRHHVGIEKPNPSETDALNILSFGKINKQSQSILLHGQQAICEVVITPVTSDINFYKTPKNPRGRASCMMGVDPHNESEARKSLYDHSRVDSDAFVATTNPWASQEGSLSDVLYNINHRDQLGYNPKSYSPNAVFFTDTEIFKTNKFMFKLISDYSIKTKTCLDSDTDIQYSCSEGTDDVTHRPCQFLQIAFPIHCSSNQALLESRSKNGMTQLSETHFANFAIGECIPLQNIIESLL.

The protein belongs to the herpesviridae major capsid protein family. As to quaternary structure, homomultimer. Makes the hexons and eleven out of twelve pentons. Interacts with triplex proteins 1/TRX1 and 2/TRX2; adjacent capsomers are linked together in groups of three by triplexes, heterotrimeric complexes composed of one molecule of TRX1 and two molecules of TRX2. Interacts with scaffold protein; this interaction allows efficient MCP transport to the host nucleus. Interacts with capsid vertex component 2/CVC2. Interacts with the small capsomere-interacting protein/SCP.

Its subcellular location is the virion. The protein resides in the host nucleus. Its function is as follows. Self-assembles to form an icosahedral capsid with a T=16 symmetry, about 200 nm in diameter, and consisting of 150 hexons and 12 pentons (total of 162 capsomers). Hexons form the edges and faces of the capsid and are each composed of six MCP molecules. In contrast, one penton is found at each of the 12 vertices. Eleven of the pentons are MCP pentamers, while the last vertex is occupied by the portal complex. The capsid is surrounded by a layer of proteinaceous material designated the tegument which, in turn, is enclosed in an envelope of host cell-derived lipids containing virus-encoded glycoproteins. The sequence is that of Major capsid protein from Homo sapiens (Human).